The following is a 94-amino-acid chain: Pyrimidine/purine nucleoside phosphorylase (94 aa).

Belongs to the nucleoside phosphorylase PpnP family.

The catalysed reaction is a purine D-ribonucleoside + phosphate = a purine nucleobase + alpha-D-ribose 1-phosphate. It catalyses the reaction adenosine + phosphate = alpha-D-ribose 1-phosphate + adenine. It carries out the reaction cytidine + phosphate = cytosine + alpha-D-ribose 1-phosphate. The enzyme catalyses guanosine + phosphate = alpha-D-ribose 1-phosphate + guanine. The catalysed reaction is inosine + phosphate = alpha-D-ribose 1-phosphate + hypoxanthine. It catalyses the reaction thymidine + phosphate = 2-deoxy-alpha-D-ribose 1-phosphate + thymine. It carries out the reaction uridine + phosphate = alpha-D-ribose 1-phosphate + uracil. The enzyme catalyses xanthosine + phosphate = alpha-D-ribose 1-phosphate + xanthine. Functionally, catalyzes the phosphorolysis of diverse nucleosides, yielding D-ribose 1-phosphate and the respective free bases. Can use uridine, adenosine, guanosine, cytidine, thymidine, inosine and xanthosine as substrates. Also catalyzes the reverse reactions. This Escherichia coli (strain ATCC 8739 / DSM 1576 / NBRC 3972 / NCIMB 8545 / WDCM 00012 / Crooks) protein is Pyrimidine/purine nucleoside phosphorylase.